We begin with the raw amino-acid sequence, 124 residues long: Large ribosomal subunit protein bL12 (124 aa).

This sequence belongs to the bacterial ribosomal protein bL12 family. Homodimer. Part of the ribosomal stalk of the 50S ribosomal subunit. Forms a multimeric L10(L12)X complex, where L10 forms an elongated spine to which 2 to 4 L12 dimers bind in a sequential fashion. Binds GTP-bound translation factors.

Its function is as follows. Forms part of the ribosomal stalk which helps the ribosome interact with GTP-bound translation factors. Is thus essential for accurate translation. The sequence is that of Large ribosomal subunit protein bL12 from Sulfurovum sp. (strain NBC37-1).